Reading from the N-terminus, the 433-residue chain is Alpha-(1,3)-fucosyltransferase 4 (433 aa).

Residues 1-20 form a disordered region; the sequence is MAPAGRKLQHESRCRPSRPV. The Cytoplasmic segment spans residues 1–54; that stretch reads MAPAGRKLQHESRCRPSRPVDAWRAAATTRGRCMGTPGARRTARRGGWGLPRTS. A helical; Signal-anchor for type II membrane protein transmembrane segment spans residues 55–74; the sequence is SGLAAAGLLCTALTACLCWG. Over 75–433 the chain is Lumenal; that stretch reads QLPPLPWASP…IHNLADWFQR (359 aa). N-linked (GlcNAc...) asparagine glycosylation is found at asparagine 117 and asparagine 218.

The protein belongs to the glycosyltransferase 10 family. As to expression, in adult, highest expression in spleen, testis, brain, lung, kidney and skeletal muscle and to a lesser extent in liver and heart.

The protein localises to the golgi apparatus. It is found in the golgi stack membrane. The catalysed reaction is a beta-D-galactosyl-(1-&gt;4)-N-acetyl-beta-D-glucosaminyl derivative + GDP-beta-L-fucose = a beta-D-galactosyl-(1-&gt;4)-[alpha-L-fucosyl-(1-&gt;3)]-N-acetyl-beta-D-glucosaminyl derivative + GDP + H(+). The enzyme catalyses an N-acetyl-alpha-neuraminyl-(2-&gt;3)-beta-D-galactosyl-(1-&gt;4)-N-acetyl-beta-D-glucosaminyl derivative + GDP-beta-L-fucose = an alpha-Neu5Ac-(2-&gt;3)-beta-D-Gal-(1-&gt;4)-[alpha-L-Fuc-(1-&gt;3)]-beta-D-GlcNAc derivative + GDP + H(+). It carries out the reaction an alpha-Neu5Ac-(2-&gt;3)-beta-D-Gal-(1-&gt;4)-beta-D-GlcNAc-(1-&gt;3)-beta-D-Gal-(1-&gt;4)-beta-D-GlcNAc derivative + GDP-beta-L-fucose = an alpha-Neu5Ac-(2-&gt;3)-beta-D-Gal-(1-&gt;4)-beta-D-GlcNAc-(1-&gt;3)-beta-D-Gal-(1-&gt;4)-[alpha-L-Fuc-(1-&gt;3)]-beta-D-GlcNAc derivative + GDP + H(+). It catalyses the reaction an alpha-Neu5Ac-(2-&gt;3)-beta-D-Gal-(1-&gt;4)-beta-D-GlcNAc6S derivative + GDP-beta-L-fucose = an alpha-Neu5Ac-(2-&gt;3)-beta-D-Gal-(1-&gt;4)-[alpha-L-Fuc-(1-&gt;3)]-beta-D-GlcNAc6S derivative + GDP + H(+). It functions in the pathway protein modification; protein glycosylation. Functionally, catalyzes alpha(1-&gt;3) linkage of fucosyl moiety transferred from GDP-beta-L-fucose to N-acetyl glucosamine (GlcNAc) within type 2 lactosamine (LacNAc, Gal-beta(1-&gt;4)GlcNAc) glycan attached to N- or O-linked glycoproteins. Robustly fucosylates nonsialylated distal LacNAc unit of the polylactosamine chain to form Lewis X antigen (CD15), a glycan determinant known to mediate important cellular functions in development and immunity. Fucosylates with lower efficiency sialylated LacNAc acceptors to form sialyl Lewis X and 6-sulfo sialyl Lewis X determinants that serve as recognition epitopes for C-type lectins. Together with FUT7 contributes to SELE, SELL and SELP selectin ligand biosynthesis and selectin-dependent lymphocyte homing, leukocyte migration and blood leukocyte homeostasis. In a cell type specific manner, may also fucosylate the internal LacNAc unit of the polylactosamine chain to form VIM-2 antigen that serves as recognition epitope for SELE. The polypeptide is Alpha-(1,3)-fucosyltransferase 4 (Fut4) (Rattus norvegicus (Rat)).